The primary structure comprises 222 residues: Cytidylate kinase (222 aa).

10-18 (GPSASGKGT) is a binding site for ATP.

It belongs to the cytidylate kinase family. Type 1 subfamily.

The protein localises to the cytoplasm. It carries out the reaction CMP + ATP = CDP + ADP. It catalyses the reaction dCMP + ATP = dCDP + ADP. The protein is Cytidylate kinase of Chromobacterium violaceum (strain ATCC 12472 / DSM 30191 / JCM 1249 / CCUG 213 / NBRC 12614 / NCIMB 9131 / NCTC 9757 / MK).